A 333-amino-acid polypeptide reads, in one-letter code: S-adenosylmethionine decarboxylase proenzyme (333 aa).

A substrate-binding site is contributed by phenylalanine 7. Catalysis depends on residues glutamate 8 and glutamate 11. Substrate is bound at residue glutamate 67. Serine 68 acts as the Schiff-base intermediate with substrate; via pyruvic acid in catalysis. Serine 68 carries the pyruvic acid (Ser); by autocatalysis modification. Catalysis depends on cysteine 82, which acts as the Proton donor; for catalytic activity. Phenylalanine 223 contacts substrate. Active-site proton acceptor; for processing activity residues include serine 229 and histidine 243. Glutamate 247 provides a ligand contact to substrate. Position 298 is a phosphoserine (serine 298).

The protein belongs to the eukaryotic AdoMetDC family. In terms of assembly, heterotetramer of two alpha and two beta chains. Pyruvate serves as cofactor. Post-translationally, is synthesized initially as an inactive proenzyme. Formation of the active enzyme involves a self-maturation process in which the active site pyruvoyl group is generated from an internal serine residue via an autocatalytic post-translational modification. Two non-identical subunits are generated from the proenzyme in this reaction, and the pyruvate is formed at the N-terminus of the alpha chain, which is derived from the carboxyl end of the proenzyme. The post-translation cleavage follows an unusual pathway, termed non-hydrolytic serinolysis, in which the side chain hydroxyl group of the serine supplies its oxygen atom to form the C-terminus of the beta chain, while the remainder of the serine residue undergoes an oxidative deamination to produce ammonia and the pyruvoyl group blocking the N-terminus of the alpha chain.

It catalyses the reaction S-adenosyl-L-methionine + H(+) = S-adenosyl 3-(methylsulfanyl)propylamine + CO2. Its pathway is amine and polyamine biosynthesis; S-adenosylmethioninamine biosynthesis; S-adenosylmethioninamine from S-adenosyl-L-methionine: step 1/1. Its function is as follows. Essential for biosynthesis of the polyamines spermidine and spermine. Promotes maintenance and self-renewal of embryonic stem cells, by maintaining spermine levels. The sequence is that of S-adenosylmethionine decarboxylase proenzyme (Amd1) from Rattus norvegicus (Rat).